The chain runs to 708 residues: Polyribonucleotide nucleotidyltransferase (708 aa).

The Mg(2+) site is built by Asp-488 and Asp-494. The region spanning 555–615 (PIIKVTKVDP…ENVDKAIELI (61 aa)) is the KH domain. An S1 motif domain is found at 625-692 (GEVLEGKVTR…DLGRLQFKRV (68 aa)).

Belongs to the polyribonucleotide nucleotidyltransferase family. Mg(2+) serves as cofactor.

The protein resides in the cytoplasm. It carries out the reaction RNA(n+1) + phosphate = RNA(n) + a ribonucleoside 5'-diphosphate. In terms of biological role, involved in mRNA degradation. Catalyzes the phosphorolysis of single-stranded polyribonucleotides processively in the 3'- to 5'-direction. This is Polyribonucleotide nucleotidyltransferase from Thermotoga sp. (strain RQ2).